Here is a 555-residue protein sequence, read N- to C-terminus: Phosphomethylpyrimidine synthase (555 aa).

Substrate-binding positions include Asn-191, Met-220, Tyr-249, His-285, 305–307, 346–349, and Glu-385; these read SRG and DGLR. A Zn(2+)-binding site is contributed by His-389. Substrate is bound at residue Tyr-412. His-453 is a binding site for Zn(2+). [4Fe-4S] cluster contacts are provided by Cys-533, Cys-536, and Cys-541.

The protein belongs to the ThiC family. In terms of assembly, homodimer. [4Fe-4S] cluster is required as a cofactor.

It catalyses the reaction 5-amino-1-(5-phospho-beta-D-ribosyl)imidazole + S-adenosyl-L-methionine = 4-amino-2-methyl-5-(phosphooxymethyl)pyrimidine + CO + 5'-deoxyadenosine + formate + L-methionine + 3 H(+). The protein operates within cofactor biosynthesis; thiamine diphosphate biosynthesis. Catalyzes the synthesis of the hydroxymethylpyrimidine phosphate (HMP-P) moiety of thiamine from aminoimidazole ribotide (AIR) in a radical S-adenosyl-L-methionine (SAM)-dependent reaction. This is Phosphomethylpyrimidine synthase from Ehrlichia ruminantium (strain Gardel).